Here is an 887-residue protein sequence, read N- to C-terminus: UPF0182 protein CTC_00086 (887 aa).

7 consecutive transmembrane segments (helical) span residues 9-29 (FIAIIILLLILFLYRSTSFII), 47-67 (FFTIGKLFTLSFALIFISIWL), 87-107 (LMIAFNCIVSSLFAYFFSSKY), 146-166 (VLILRVLVFLVIYTLILYFII), 195-215 (GKQLAVVSAIILLFLSMGYII), 242-262 (IYRIIIIVSFIGSIVVFISII), and 266-286 (IKPIIISLVLIFLLILSEGAT).

Belongs to the UPF0182 family.

The protein localises to the cell membrane. The polypeptide is UPF0182 protein CTC_00086 (Clostridium tetani (strain Massachusetts / E88)).